The sequence spans 417 residues: Conserved oligomeric Golgi complex subunit 1 (417 aa).

M1 carries the N-acetylmethionine modification. Position 305 is a phosphoserine (S305).

This sequence belongs to the COG1 family. As to quaternary structure, component of the conserved oligomeric Golgi (COG or Sec34/Sec35) complex which consists of eight different proteins COG1-COG8.

The protein resides in the golgi apparatus membrane. Its function is as follows. Acts as essential component of the peripheral membrane COG complex that is involved in intra-Golgi protein trafficking. COG is located at the cis-Golgi, and regulates tethering of retrograde intra-Golgi vesicles and possibly a number of other membrane trafficking events. In Saccharomyces cerevisiae (strain ATCC 204508 / S288c) (Baker's yeast), this protein is Conserved oligomeric Golgi complex subunit 1 (COG1).